A 276-amino-acid polypeptide reads, in one-letter code: Ribonuclease 3 (276 aa).

The interval 1–29 is disordered; the sequence is MRGTVSVPKKAEDAKADPPAKKKADTQAS. Residues 9–25 show a composition bias toward basic and acidic residues; sequence KKAEDAKADPPAKKKAD. The RNase III domain maps to 31 to 157; it reads HTLLEGRLGY…VIGAVYLDQG (127 aa). Glu-70 lines the Mg(2+) pocket. Residue Asp-74 is part of the active site. Mg(2+) contacts are provided by Asp-143 and Glu-146. Glu-146 is an active-site residue. Residues 184-252 form the DRBM domain; the sequence is DWKTSLQELT…AESAWRSIRA (69 aa). The tract at residues 227-276 is disordered; it reads YGTGTGRSKKEAEQQAAESAWRSIRAAADERAKATADAVDADPDEASASA. The segment covering 265–276 has biased composition (acidic residues); that stretch reads VDADPDEASASA.

This sequence belongs to the ribonuclease III family. As to quaternary structure, homodimer. It depends on Mg(2+) as a cofactor.

The protein localises to the cytoplasm. The enzyme catalyses Endonucleolytic cleavage to 5'-phosphomonoester.. Functionally, digests double-stranded RNA. Involved in the processing of primary rRNA transcript to yield the immediate precursors to the large and small rRNAs (23S and 16S). Also processes some mRNAs, and tRNAs when they are encoded in the rRNA operon. May modulate key aspects of gene expression as its absence has extensive effects on the abundance of about 200 different transcripts. Probably processes pre-crRNA and tracrRNA of type II CRISPR loci if present in the organism. This chain is Ribonuclease 3 (rnc), found in Streptomyces coelicolor (strain ATCC BAA-471 / A3(2) / M145).